A 411-amino-acid chain; its full sequence is NADH-quinone oxidoreductase subunit D 2 (411 aa).

Belongs to the complex I 49 kDa subunit family. As to quaternary structure, NDH-1 is composed of 14 different subunits. Subunits NuoB, C, D, E, F, and G constitute the peripheral sector of the complex.

The protein localises to the cell membrane. The catalysed reaction is a quinone + NADH + 5 H(+)(in) = a quinol + NAD(+) + 4 H(+)(out). In terms of biological role, NDH-1 shuttles electrons from NADH, via FMN and iron-sulfur (Fe-S) centers, to quinones in the respiratory chain. The immediate electron acceptor for the enzyme in this species is believed to be ubiquinone. Couples the redox reaction to proton translocation (for every two electrons transferred, four hydrogen ions are translocated across the cytoplasmic membrane), and thus conserves the redox energy in a proton gradient. The sequence is that of NADH-quinone oxidoreductase subunit D 2 from Chloroflexus aurantiacus (strain ATCC 29366 / DSM 635 / J-10-fl).